We begin with the raw amino-acid sequence, 214 residues long: 3-isopropylmalate dehydratase small subunit (214 aa).

The protein belongs to the LeuD family. LeuD type 1 subfamily. As to quaternary structure, heterodimer of LeuC and LeuD.

It carries out the reaction (2R,3S)-3-isopropylmalate = (2S)-2-isopropylmalate. Its pathway is amino-acid biosynthesis; L-leucine biosynthesis; L-leucine from 3-methyl-2-oxobutanoate: step 2/4. Its function is as follows. Catalyzes the isomerization between 2-isopropylmalate and 3-isopropylmalate, via the formation of 2-isopropylmaleate. This is 3-isopropylmalate dehydratase small subunit from Alcanivorax borkumensis (strain ATCC 700651 / DSM 11573 / NCIMB 13689 / SK2).